We begin with the raw amino-acid sequence, 84 residues long: Cell division topological specificity factor (84 aa).

This sequence belongs to the MinE family.

Prevents the cell division inhibition by proteins MinC and MinD at internal division sites while permitting inhibition at polar sites. This ensures cell division at the proper site by restricting the formation of a division septum at the midpoint of the long axis of the cell. The protein is Cell division topological specificity factor of Ectopseudomonas mendocina (strain ymp) (Pseudomonas mendocina).